We begin with the raw amino-acid sequence, 365 residues long: S-type anion channel SLAH4 (365 aa).

Over 1–25 the chain is Cytoplasmic; the sequence is MEIPSQEIHIMIDNTISRRKERKTN. Residues 26 to 46 traverse the membrane as a helical segment; sequence LADAEPIVLMSVLSSLHAGYF. Residues 47–73 are Extracellular-facing; sequence RISLSLCSQALLWKIMVHLHSELPSMA. The chain crosses the membrane as a helical span at residues 74 to 94; it reads YYLLWYLALATQVSLCFLYAF. Over 95-106 the chain is Cytoplasmic; the sequence is KCIFLFDMVKEE. The chain crosses the membrane as a helical span at residues 107-127; it reads FSHYIGVNYLYAPSISCLLLL. Topologically, residues 128–131 are extracellular; the sequence is QSAP. The chain crosses the membrane as a helical span at residues 132–152; the sequence is MIEPHSVLYQTLFWIFAVPVL. The Cytoplasmic segment spans residues 153 to 168; the sequence is TLDTKLYGQWFTTEKR. The helical transmembrane segment at 169 to 189 threads the bilayer; it reads FLSIMANPASQVSVIANLVAA. At 190–199 the chain is on the extracellular side; sequence RGAAEMGWKE. Residues 200 to 220 form a helical membrane-spanning segment; the sequence is CALCLFSLGMVHYLVIFVTLY. Over 221-235 the chain is Cytoplasmic; sequence QRLPGGNNFPTTLRP. A helical transmembrane segment spans residues 236 to 256; that stretch reads VFFLFFAAPATASLAWNSICG. Residue Asn257 is a topological domain, extracellular. A helical transmembrane segment spans residues 258-278; the sequence is FDTIAKMLFFLSLFIFISLVC. Residues 279–291 lie on the Cytoplasmic side of the membrane; the sequence is RPNLLKKSIKRFN. A helical membrane pass occupies residues 292-312; it reads VAWWAYSFPITFLALNSVQYA. The Extracellular segment spans residues 313–321; the sequence is QEVKDHVAS. Residues 322-342 form a helical membrane-spanning segment; that stretch reads VLMFIFSSMSVLIFISVMLLT. The Cytoplasmic segment spans residues 343 to 365; sequence AANSKRLLRRDHVLWSSTGPKDK.

Belongs to the SLAC1 S-type anion channel family. Homotrimer.

It is found in the cell membrane. Its function is as follows. Slow, weak voltage-dependent S-type anion efflux channel involved in maintenance of anion homeostasis. This Arabidopsis thaliana (Mouse-ear cress) protein is S-type anion channel SLAH4 (SLAH4).